A 140-amino-acid chain; its full sequence is Large-conductance mechanosensitive channel (140 aa).

Helical transmembrane passes span 21 to 41 and 82 to 102; these read VGVIIGGAFGKIVESLVGDVI and GSFITVAINFMILAFIIFMMI.

This sequence belongs to the MscL family. Homopentamer.

It is found in the cell inner membrane. In terms of biological role, channel that opens in response to stretch forces in the membrane lipid bilayer. May participate in the regulation of osmotic pressure changes within the cell. The sequence is that of Large-conductance mechanosensitive channel from Leptothrix cholodnii (strain ATCC 51168 / LMG 8142 / SP-6) (Leptothrix discophora (strain SP-6)).